We begin with the raw amino-acid sequence, 388 residues long: Chorismate synthase (388 aa).

Arg39 and Arg45 together coordinate NADP(+). Residues 95–118 (EKNEKSRRVSRPRPGHADLVGGMK) are disordered. Residues 130 to 132 (RSS), 251 to 252 (NA), Gly296, 311 to 315 (KPIPT), and Arg337 each bind FMN.

This sequence belongs to the chorismate synthase family. As to quaternary structure, homotetramer. FMNH2 is required as a cofactor.

It catalyses the reaction 5-O-(1-carboxyvinyl)-3-phosphoshikimate = chorismate + phosphate. The protein operates within metabolic intermediate biosynthesis; chorismate biosynthesis; chorismate from D-erythrose 4-phosphate and phosphoenolpyruvate: step 7/7. Catalyzes the anti-1,4-elimination of the C-3 phosphate and the C-6 proR hydrogen from 5-enolpyruvylshikimate-3-phosphate (EPSP) to yield chorismate, which is the branch point compound that serves as the starting substrate for the three terminal pathways of aromatic amino acid biosynthesis. This reaction introduces a second double bond into the aromatic ring system. This is Chorismate synthase from Listeria monocytogenes serotype 4b (strain CLIP80459).